A 249-amino-acid polypeptide reads, in one-letter code: Pyridoxine 5'-phosphate synthase (249 aa).

Asn-10 is a binding site for 3-amino-2-oxopropyl phosphate. 1-deoxy-D-xylulose 5-phosphate is bound at residue 12 to 13; the sequence is DH. Arg-21 serves as a coordination point for 3-amino-2-oxopropyl phosphate. Catalysis depends on His-46, which acts as the Proton acceptor. Arg-48 and His-53 together coordinate 1-deoxy-D-xylulose 5-phosphate. Glu-73 (proton acceptor) is an active-site residue. Thr-103 contacts 1-deoxy-D-xylulose 5-phosphate. The active-site Proton donor is the His-194. Residues Gly-195 and 216–217 each bind 3-amino-2-oxopropyl phosphate; that span reads GH.

It belongs to the PNP synthase family. Homooctamer; tetramer of dimers.

Its subcellular location is the cytoplasm. The enzyme catalyses 3-amino-2-oxopropyl phosphate + 1-deoxy-D-xylulose 5-phosphate = pyridoxine 5'-phosphate + phosphate + 2 H2O + H(+). It participates in cofactor biosynthesis; pyridoxine 5'-phosphate biosynthesis; pyridoxine 5'-phosphate from D-erythrose 4-phosphate: step 5/5. Functionally, catalyzes the complicated ring closure reaction between the two acyclic compounds 1-deoxy-D-xylulose-5-phosphate (DXP) and 3-amino-2-oxopropyl phosphate (1-amino-acetone-3-phosphate or AAP) to form pyridoxine 5'-phosphate (PNP) and inorganic phosphate. In Rhodospirillum rubrum (strain ATCC 11170 / ATH 1.1.1 / DSM 467 / LMG 4362 / NCIMB 8255 / S1), this protein is Pyridoxine 5'-phosphate synthase.